The following is a 443-amino-acid chain: Tol-Pal system protein TolB (443 aa).

An N-terminal signal peptide occupies residues 1–24; sequence MSFQIRVFTAILAVLSLFTAPVLA. Positions 424 to 443 are disordered; it reads LRPVRTPEGGSDPSWSPLQR.

Belongs to the TolB family. In terms of assembly, the Tol-Pal system is composed of five core proteins: the inner membrane proteins TolA, TolQ and TolR, the periplasmic protein TolB and the outer membrane protein Pal. They form a network linking the inner and outer membranes and the peptidoglycan layer.

The protein resides in the periplasm. Its function is as follows. Part of the Tol-Pal system, which plays a role in outer membrane invagination during cell division and is important for maintaining outer membrane integrity. This Roseobacter denitrificans (strain ATCC 33942 / OCh 114) (Erythrobacter sp. (strain OCh 114)) protein is Tol-Pal system protein TolB.